Here is an 858-residue protein sequence, read N- to C-terminus: Ubiquitin carboxyl-terminal hydrolase 5 (858 aa).

At A2 the chain carries N-acetylalanine. The segment at 74–96 (RRTRRPKEEDPATGTGDPPRKKP) is disordered. A Glycyl lysine isopeptide (Lys-Gly) (interchain with G-Cter in SUMO) cross-link involves residue K113. S149 and S156 each carry phosphoserine. A UBP-type; degenerate zinc finger spans residues 175-283 (QVSKHAFSLK…EHLSHFGIDM (109 aa)). An intrachain disulfide couples C195 to C816. Zn(2+) is bound by residues C199 and C202. Substrate is bound at residue W209. A Zn(2+)-binding site is contributed by C219. Residue 221 to 224 (RRYF) participates in substrate binding. H232 lines the Zn(2+) pocket. Substrate-binding residues include Y259, Y261, and D264. A Phosphothreonine modification is found at T292. The USP domain maps to 326–856 (TGIRNLGNSC…LGYIYFYQRV (531 aa)). The active-site Nucleophile is C335. T623 is modified (phosphothreonine). 2 UBA domains span residues 654–695 (MLDE…VMSH) and 722–762 (PPPE…IFSH). 3 positions are modified to phosphoserine: S779, S783, and S785. The active-site Proton acceptor is H818.

Belongs to the peptidase C19 family. In terms of assembly, homodimer. Interacts with TRIML1. In terms of processing, ubiquitinated by SMURF1; leading to proteasomal degradation. SUMOylated at Lys-113; SUMOylation affects the interaction with Cav3.2 channels.

It localises to the cytoplasm. It is found in the stress granule. The protein resides in the nucleus. The catalysed reaction is Thiol-dependent hydrolysis of ester, thioester, amide, peptide and isopeptide bonds formed by the C-terminal Gly of ubiquitin (a 76-residue protein attached to proteins as an intracellular targeting signal).. In terms of biological role, deubiquitinating enzyme that participates in a wide range of cellular processes by specifically cleaving isopeptide bonds between ubiquitin and substrate proteins or ubiquitin itself. Affects thereby important cellular signaling pathways such as NF-kappa-B, Wnt/beta-catenin, and cytokine production by regulating ubiquitin-dependent protein degradation. Participates in the activation of the Wnt signaling pathway by promoting FOXM1 deubiquitination and stabilization that induces the recruitment of beta-catenin to Wnt target gene promoter. Regulates the assembly and disassembly of heat-induced stress granules by mediating the hydrolysis of unanchored ubiquitin chains. Promotes lipopolysaccharide-induced apoptosis and inflammatory response by stabilizing the TXNIP protein. Affects T-cell biology by stabilizing the inhibitory receptor on T-cells PDC1. Acts as a negative regulator of autophagy by regulating ULK1 at both protein and mRNA levels. Acts also as a negative regulator of type I interferon production by simultaneously removing both 'Lys-48'-linked unanchored and 'Lys-63'-linked anchored polyubiquitin chains on the transcription factor IRF3. Modulates the stability of DNA mismatch repair protein MLH1 and counteracts the effect of the ubiquitin ligase UBR4. Upon activation by insulin, it gets phosphorylated through mTORC1-mediated phosphorylation to enhance YTHDF1 stability by removing 'Lys-11'-linked polyubiquitination. May also deubiquitinate other substrates such as the calcium channel CACNA1H. This is Ubiquitin carboxyl-terminal hydrolase 5 (USP5) from Homo sapiens (Human).